The primary structure comprises 218 residues: Peptide methionine sulfoxide reductase MsrA (218 aa).

The interval 1–28 is disordered; the sequence is MSFLDSYRKKTQMPSTDEALPGRAQPIP. Cys57 is a catalytic residue.

Belongs to the MsrA Met sulfoxide reductase family.

The catalysed reaction is L-methionyl-[protein] + [thioredoxin]-disulfide + H2O = L-methionyl-(S)-S-oxide-[protein] + [thioredoxin]-dithiol. The enzyme catalyses [thioredoxin]-disulfide + L-methionine + H2O = L-methionine (S)-S-oxide + [thioredoxin]-dithiol. Functionally, has an important function as a repair enzyme for proteins that have been inactivated by oxidation. Catalyzes the reversible oxidation-reduction of methionine sulfoxide in proteins to methionine. The chain is Peptide methionine sulfoxide reductase MsrA from Brucella anthropi (strain ATCC 49188 / DSM 6882 / CCUG 24695 / JCM 21032 / LMG 3331 / NBRC 15819 / NCTC 12168 / Alc 37) (Ochrobactrum anthropi).